Consider the following 482-residue polypeptide: Alpha-ketoglutarate semialdehyde dehydrogenase (482 aa).

Positions 1–28 are disordered; the sequence is MTDPSKNYVNGEWVTSETGETTEVTNPA. Low complexity predominate over residues 11–25; the sequence is GEWVTSETGETTEVT. Cysteine 284 is a catalytic residue.

This sequence belongs to the aldehyde dehydrogenase family. Homotetramer.

The catalysed reaction is 2,5-dioxopentanoate + NADP(+) + H2O = 2-oxoglutarate + NADPH + 2 H(+). Its pathway is carbohydrate metabolism; D-xylose degradation. In terms of biological role, alpha-ketoglutarate semialdehyde dehydrogenase involved in the degradation of D-xylose, a major component of hemicelluloses such as xylan. Catalyzes the fifth reaction in the xylose utilization pathway through dehydratation of alpha-ketoglutarate semialdehyde (2,5-dioxopentanoate) into alpha-ketoglutarate. This Haloferax volcanii (strain ATCC 29605 / DSM 3757 / JCM 8879 / NBRC 14742 / NCIMB 2012 / VKM B-1768 / DS2) (Halobacterium volcanii) protein is Alpha-ketoglutarate semialdehyde dehydrogenase.